Here is a 450-residue protein sequence, read N- to C-terminus: UDP-N-acetylmuramoylalanine--D-glutamate ligase (450 aa).

119-125 (GSNGKTT) contributes to the ATP binding site.

The protein belongs to the MurCDEF family.

The protein resides in the cytoplasm. It catalyses the reaction UDP-N-acetyl-alpha-D-muramoyl-L-alanine + D-glutamate + ATP = UDP-N-acetyl-alpha-D-muramoyl-L-alanyl-D-glutamate + ADP + phosphate + H(+). It functions in the pathway cell wall biogenesis; peptidoglycan biosynthesis. Functionally, cell wall formation. Catalyzes the addition of glutamate to the nucleotide precursor UDP-N-acetylmuramoyl-L-alanine (UMA). The polypeptide is UDP-N-acetylmuramoylalanine--D-glutamate ligase (Bacillus mycoides (strain KBAB4) (Bacillus weihenstephanensis)).